The following is a 119-amino-acid chain: Large ribosomal subunit protein bL19c (119 aa).

Belongs to the bacterial ribosomal protein bL19 family.

The protein resides in the plastid. The protein localises to the chloroplast. The chain is Large ribosomal subunit protein bL19c from Mesostigma viride (Green alga).